The sequence spans 340 residues: MTNSLRVAVLGGGSFGTAIANIIAANGHHTYLWMRDEDRAEKCQFERENPEYLPGYKLNDNLEITSDLVASVADADVVTLSVPSQSFREVARRVAPHIPENAIVLSTTKGIEGESFLLMSQILEQELGNVRIGVLSGPNFAKEIIQNQFTGSVIASEHDSVIQCIQQVFASKTFRIYANTDRYGVELGGALKNIYAIVTGMAAALGCGSNTQAMLLTRSLAEMTRLATALGANGMTFLGLAGVGDLILTCTSDLSRNYRVGYAIGKGESLAQVLDNIGQVAEGVNTVKIVKDKADEMGIYMPLVTGLHEVLFEGKDILEVVTGLMTGAMASDVDMQGGVQ.

Residues serine 14, phenylalanine 15, arginine 35, and lysine 109 each coordinate NADPH. Lysine 109 and glycine 137 together coordinate sn-glycerol 3-phosphate. Alanine 141 is an NADPH binding site. 5 residues coordinate sn-glycerol 3-phosphate: lysine 192, aspartate 245, serine 255, arginine 256, and asparagine 257. Lysine 192 (proton acceptor) is an active-site residue. Position 256 (arginine 256) interacts with NADPH. The NADPH site is built by valine 280 and glutamate 282.

The protein belongs to the NAD-dependent glycerol-3-phosphate dehydrogenase family.

It localises to the cytoplasm. It catalyses the reaction sn-glycerol 3-phosphate + NAD(+) = dihydroxyacetone phosphate + NADH + H(+). The enzyme catalyses sn-glycerol 3-phosphate + NADP(+) = dihydroxyacetone phosphate + NADPH + H(+). It functions in the pathway membrane lipid metabolism; glycerophospholipid metabolism. In terms of biological role, catalyzes the reduction of the glycolytic intermediate dihydroxyacetone phosphate (DHAP) to sn-glycerol 3-phosphate (G3P), the key precursor for phospholipid synthesis. The protein is Glycerol-3-phosphate dehydrogenase [NAD(P)+] of Teredinibacter turnerae (strain ATCC 39867 / T7901).